We begin with the raw amino-acid sequence, 500 residues long: MSDQQLDPQALQQEENTLIALRKEKLAAGRAKGQAFPNDFRRDSYCNDLQKQYVDKTKEELAEAAIPVKVAGRIMLNRGSFMVIQDMTGRIQVYVNRKTLPEETLAEVKTWDLGDIIAAEGTLARSGKGDLYVEMTSVRLLTKSLRPLPDKHHGLTDTEQRYRQRYVDLIVNEEVRETFRVRSQVIAHIRSFLMKRDFLEVETPMLQTIPGGAAAKPFETHHNALDMEMFLRIAPELYLKRLVVGGFEKVFEINRNFRNEGVSTRHNPEFTMLEFYQAYADYEDNMDLTEELFRELAQLVLGSTDVPYGDKVFHFGEPFVRLSVFDSILKYNPELTVADLQDIDKARAIAKKAGAKVLGFEGLGKLQVMIFEELVEHKLEQPHFITQYPFEVSPLARRNDENPNVTDRFELFIGGREIANAYSELNDAEDQAERFQAQVADKDAGDDEAMHYDADFVRALEYGMPPTAGEGIGIDRLVMLLTDSPSIRDVILFPHMRPQA.

E410 and E417 together coordinate Mg(2+).

The protein belongs to the class-II aminoacyl-tRNA synthetase family. As to quaternary structure, homodimer. Mg(2+) serves as cofactor.

Its subcellular location is the cytoplasm. The catalysed reaction is tRNA(Lys) + L-lysine + ATP = L-lysyl-tRNA(Lys) + AMP + diphosphate. The polypeptide is Lysine--tRNA ligase (Pseudomonas syringae pv. syringae (strain B728a)).